Here is a 278-residue protein sequence, read N- to C-terminus: MAIRKYKPTTPGRRGSSVSDFAEITRDHPEKSLVRPLHGRGGRNAHGRITTRHKGGGHKRAYRVIDFRRHDKDGVNAKVAHIEYDPNRTANIALLHYLDGEKRYIIAPQGLKQGAIVESGANADIKPGNNLPLRNIPAGTLVHAVELRPGGGAKMARSAGASIQLLGKEGSYASLRMPSGEIRRVDVRCRATVGEVGNAEQANINWGKAGRMRWKGKRPTVRGVVMNPVDHPHGGGEGKTSGGRHPVSPWGKPEGRTRKPKKASDKLIVRRRRTGKKR.

2 disordered regions span residues 1-58 (MAIR…GGGH) and 224-278 (VVMN…GKKR). Basic and acidic residues predominate over residues 23 to 33 (EITRDHPEKSL). A compositionally biased stretch (basic residues) spans 37 to 58 (LHGRGGRNAHGRITTRHKGGGH). Residues 253–268 (PEGRTRKPKKASDKLI) are compositionally biased toward basic and acidic residues. Positions 269-278 (VRRRRTGKKR) are enriched in basic residues.

Belongs to the universal ribosomal protein uL2 family. In terms of assembly, part of the 50S ribosomal subunit. Forms a bridge to the 30S subunit in the 70S ribosome.

Functionally, one of the primary rRNA binding proteins. Required for association of the 30S and 50S subunits to form the 70S ribosome, for tRNA binding and peptide bond formation. It has been suggested to have peptidyltransferase activity; this is somewhat controversial. Makes several contacts with the 16S rRNA in the 70S ribosome. In Mycolicibacterium vanbaalenii (strain DSM 7251 / JCM 13017 / BCRC 16820 / KCTC 9966 / NRRL B-24157 / PYR-1) (Mycobacterium vanbaalenii), this protein is Large ribosomal subunit protein uL2.